The following is a 394-amino-acid chain: uncharacterized protein (394 aa).

12 helical membrane passes run 13 to 33 (LITTIHMVLTTMIHMALTTMI), 35 to 55 (MAPTTMIHMALTTMIPTVLPT), 73 to 95 (TTMTLTVPTTMTLTVPTTMTLTV), 110 to 130 (ALTVPTMTILMALTMMIHMVL), 152 to 172 (IHMVLTTMIHMALTTMIPTVL), 179 to 198 (LMVLTMTIRTAPATTMTLTV), 216 to 236 (VLLATMILTDLPITTTLTVLP), 241 to 261 (VLMVPTMTILMALTMMIHMVL), 267 to 287 (VLMVPATTIRMVLTTMIPTVL), 293 to 313 (VLMVPTTMIHTAPATTMTLTV), 340 to 360 (MMTLMVHLIEAVVINTVVTTI), and 372 to 392 (ILLCLDLSMKILCMSCGYVSA).

Its subcellular location is the membrane. This is an uncharacterized protein from Saccharomyces cerevisiae (strain ATCC 204508 / S288c) (Baker's yeast).